The primary structure comprises 499 residues: Glycerol kinase (499 aa).

Threonine 17 is an ADP binding site. Residues threonine 17, threonine 18, and serine 19 each coordinate ATP. Threonine 17 contributes to the sn-glycerol 3-phosphate binding site. Arginine 21 contributes to the ADP binding site. Sn-glycerol 3-phosphate-binding residues include arginine 87, glutamate 88, tyrosine 139, and aspartate 243. Arginine 87, glutamate 88, tyrosine 139, aspartate 243, and glutamine 244 together coordinate glycerol. Positions 265 and 308 each coordinate ADP. ATP is bound by residues threonine 265, glycine 308, glutamine 312, and glycine 409. Residues glycine 409 and asparagine 413 each coordinate ADP.

It belongs to the FGGY kinase family.

It catalyses the reaction glycerol + ATP = sn-glycerol 3-phosphate + ADP + H(+). The protein operates within polyol metabolism; glycerol degradation via glycerol kinase pathway; sn-glycerol 3-phosphate from glycerol: step 1/1. Inhibited by fructose 1,6-bisphosphate (FBP). Its function is as follows. Key enzyme in the regulation of glycerol uptake and metabolism. Catalyzes the phosphorylation of glycerol to yield sn-glycerol 3-phosphate. The polypeptide is Glycerol kinase (Pseudomonas putida (strain ATCC 700007 / DSM 6899 / JCM 31910 / BCRC 17059 / LMG 24140 / F1)).